The following is a 199-amino-acid chain: Ribonuclease HII (199 aa).

Residues 9 to 198 (QFVAGVDEVG…VRAAIEQMNL (190 aa)) enclose the RNase H type-2 domain. The a divalent metal cation site is built by aspartate 15, glutamate 16, and aspartate 107.

This sequence belongs to the RNase HII family. Mn(2+) serves as cofactor. It depends on Mg(2+) as a cofactor.

It localises to the cytoplasm. The enzyme catalyses Endonucleolytic cleavage to 5'-phosphomonoester.. Its function is as follows. Endonuclease that specifically degrades the RNA of RNA-DNA hybrids. The protein is Ribonuclease HII of Saccharophagus degradans (strain 2-40 / ATCC 43961 / DSM 17024).